The following is a 301-amino-acid chain: Diaminopimelate epimerase (301 aa).

Positions 15, 47, and 67 each coordinate substrate. The active-site Proton donor is C76. Residues 77-78 (GN), N163, N197, and 215-216 (ER) each bind substrate. C224 acts as the Proton acceptor in catalysis. A substrate-binding site is contributed by 225–226 (GS).

Belongs to the diaminopimelate epimerase family. In terms of assembly, homodimer.

Its subcellular location is the cytoplasm. It catalyses the reaction (2S,6S)-2,6-diaminopimelate = meso-2,6-diaminopimelate. The protein operates within amino-acid biosynthesis; L-lysine biosynthesis via DAP pathway; DL-2,6-diaminopimelate from LL-2,6-diaminopimelate: step 1/1. Catalyzes the stereoinversion of LL-2,6-diaminopimelate (L,L-DAP) to meso-diaminopimelate (meso-DAP), a precursor of L-lysine and an essential component of the bacterial peptidoglycan. This chain is Diaminopimelate epimerase, found in Rhizobium rhizogenes (strain K84 / ATCC BAA-868) (Agrobacterium radiobacter).